Reading from the N-terminus, the 26-residue chain is uncharacterized protein (26 aa).

A compositionally biased stretch (polar residues) spans M1 to V16. The interval M1–S26 is disordered.

This is an uncharacterized protein from Saccharomyces cerevisiae (strain ATCC 204508 / S288c) (Baker's yeast).